Consider the following 145-residue polypeptide: Selenoprotein M (145 aa).

Residues 1 to 23 form the signal peptide; that stretch reads MSLLLPPLALLLLLAALVAPATA. Active-site nucleophile residues include C45 and U48. The segment at residues 45 to 48 is a cross-link (cysteinyl-selenocysteine (Cys-Sec)); sequence CGGU. Position 48 (U48) is a non-standard amino acid, selenocysteine.

The protein belongs to the selenoprotein M/F family. As to expression, widely expressed.

The protein resides in the cytoplasm. It is found in the perinuclear region. It localises to the endoplasmic reticulum. The protein localises to the golgi apparatus. In terms of biological role, may function as a thiol-disulfide oxidoreductase that participates in disulfide bond formation. The sequence is that of Selenoprotein M from Homo sapiens (Human).